A 298-amino-acid chain; its full sequence is Pheromone-regulated membrane protein 9 (298 aa).

Residues 1 to 111 are Cytoplasmic-facing; the sequence is MSPQYHFYFV…YWIYEVTRHK (111 aa). The helical transmembrane segment at 112 to 132 threads the bilayer; it reads AAVILLVLIVTSILLLVFFYN. Topologically, residues 133–137 are extracellular; it reads TEFCV. The chain crosses the membrane as a helical span at residues 138 to 158; sequence AFEILLFSFCFPGTCMVVIAF. Over 159-298 the chain is Cytoplasmic; it reads SEPIGDREFK…QEYPGVDEFF (140 aa). The segment at 235–262 is disordered; the sequence is SSASNVKDAQSNDETAGTPNEAAESSSF. Residues 297-298 are COPII binding; the sequence is FF.

This sequence belongs to the DUP/COS family. In terms of assembly, interacts with PRM8. Binds to COPII coated vesicles.

The protein resides in the cell membrane. Functionally, may be involved in endoplasmic reticulum exit trafficking of proteins. In Saccharomyces cerevisiae (strain ATCC 204508 / S288c) (Baker's yeast), this protein is Pheromone-regulated membrane protein 9 (PRM9).